Reading from the N-terminus, the 445-residue chain is Tubulin beta-2 chain (445 aa).

The GTP site is built by glutamine 11, glutamate 69, serine 138, glycine 142, threonine 143, glycine 144, asparagine 204, and asparagine 226. Glutamate 69 is a binding site for Mg(2+). Residues 424–445 form a disordered region; the sequence is QYQDATAEDEGEFDEDEEVEEA. Residues 429–445 show a composition bias toward acidic residues; that stretch reads TAEDEGEFDEDEEVEEA.

The protein belongs to the tubulin family. As to quaternary structure, dimer of alpha and beta chains. A typical microtubule is a hollow water-filled tube with an outer diameter of 25 nm and an inner diameter of 15 nM. Alpha-beta heterodimers associate head-to-tail to form protofilaments running lengthwise along the microtubule wall with the beta-tubulin subunit facing the microtubule plus end conferring a structural polarity. Microtubules usually have 13 protofilaments but different protofilament numbers can be found in some organisms and specialized cells. Mg(2+) is required as a cofactor.

It is found in the cytoplasm. The protein resides in the cytoskeleton. Functionally, tubulin is the major constituent of microtubules, a cylinder consisting of laterally associated linear protofilaments composed of alpha- and beta-tubulin heterodimers. Microtubules grow by the addition of GTP-tubulin dimers to the microtubule end, where a stabilizing cap forms. Below the cap, tubulin dimers are in GDP-bound state, owing to GTPase activity of alpha-tubulin. The chain is Tubulin beta-2 chain (TUB-2) from Echinococcus multilocularis (Fox tapeworm).